We begin with the raw amino-acid sequence, 394 residues long: GDP-mannose transporter (394 aa).

Over 1–56 (MSNKKNEDIEMRAVEGANDFGGEKDPFLGRNSPVLRPRGREPTASAYFGKLDNSPG) the chain is Cytoplasmic. Residues 57–77 (ASIIAYCLSSISMTVVNKYVV) traverse the membrane as a helical segment. Topologically, residues 78 to 81 (SGES) are lumenal. A helical transmembrane segment spans residues 82–102 (WNLNFFYLGVQSLVCTIAILL). The Cytoplasmic segment spans residues 103–122 (SRQTGLIKNLAPFDSNKAKR). Residues 123–145 (WFPVSLLLVSMIYTGANALQYLS) form a helical membrane-spanning segment. Topologically, residues 146-150 (VPVYT) are lumenal. Residues 151 to 168 (IFKNLTIIVIAYGEVLWF) traverse the membrane as a helical segment. At 169 to 174 (GGSVTP) the chain is on the cytoplasmic side. The chain crosses the membrane as a helical span at residues 175–199 (LMLLSFGLMVLSSVVAAWADIQAAI). Topologically, residues 200 to 207 (DGVGHSAE) are lumenal. A helical membrane pass occupies residues 208 to 228 (TSAALATLNAGYAWMGLNVVC). At 229–249 (TSSYLLGMRKVIKKMNFKDYD) the chain is on the cytoplasmic side. A helical transmembrane segment spans residues 250–270 (SMFYNNLLTIPVLVVCSLLVE). Topologically, residues 271-288 (DWSSENLAKNFPIETRNK) are lumenal. The helical transmembrane segment at 289 to 309 (LMVGMIYSGLAAIFISYCSAW) threads the bilayer. The Cytoplasmic segment spans residues 310-317 (CIRVTSST). Residues 318–338 (TYSMVGALNKLPIAISGLIFF) traverse the membrane as a helical segment. Residues 339–341 (DAP) are Lumenal-facing. A helical transmembrane segment spans residues 342-362 (ITFGSITAIAVGFVSGLVFAW). At 363-394 (AKVRQKAQEAGLLPTTKPTMSASAQSNRDANS) the chain is on the cytoplasmic side.

It belongs to the TPT transporter family. SLC35D subfamily. Homooligomer.

It is found in the golgi apparatus membrane. Its subcellular location is the cytoplasmic vesicle membrane. The protein resides in the endoplasmic reticulum membrane. Involved in the import of GDP-mannose from the cytoplasm into the Golgi lumen. This chain is GDP-mannose transporter (VRG4), found in Chaetomium globosum (strain ATCC 6205 / CBS 148.51 / DSM 1962 / NBRC 6347 / NRRL 1970) (Soil fungus).